Here is a 545-residue protein sequence, read N- to C-terminus: ATP synthase subunit alpha (545 aa).

172-179 (GDRKTGKT) lines the ATP pocket. A disordered region spans residues 511–545 (FQTTDGTPVINEPEARPLGDDEVTKSQITVSRKTQ). Basic and acidic residues predominate over residues 523–534 (PEARPLGDDEVT). The segment covering 535 to 545 (KSQITVSRKTQ) has biased composition (polar residues).

This sequence belongs to the ATPase alpha/beta chains family. In terms of assembly, F-type ATPases have 2 components, CF(1) - the catalytic core - and CF(0) - the membrane proton channel. CF(1) has five subunits: alpha(3), beta(3), gamma(1), delta(1), epsilon(1). CF(0) has three main subunits: a(1), b(2) and c(9-12). The alpha and beta chains form an alternating ring which encloses part of the gamma chain. CF(1) is attached to CF(0) by a central stalk formed by the gamma and epsilon chains, while a peripheral stalk is formed by the delta and b chains.

It localises to the cell membrane. It catalyses the reaction ATP + H2O + 4 H(+)(in) = ADP + phosphate + 5 H(+)(out). Its function is as follows. Produces ATP from ADP in the presence of a proton gradient across the membrane. The alpha chain is a regulatory subunit. This is ATP synthase subunit alpha from Corynebacterium jeikeium (strain K411).